Here is a 185-residue protein sequence, read N- to C-terminus: Anaphase-promoting complex subunit 10 (185 aa).

T2 is modified (N-acetylthreonine). Residues T2–R185 form the DOC domain. N6-acetyllysine is present on K169.

This sequence belongs to the APC10 family. As to quaternary structure, the mammalian APC/C is composed at least of 14 distinct subunits ANAPC1, ANAPC2, CDC27/APC3, ANAPC4, ANAPC5, CDC16/APC6, ANAPC7, CDC23/APC8, ANAPC10, ANAPC11, CDC26/APC12, ANAPC13, ANAPC15 and ANAPC16 that assemble into a complex of at least 19 chains with a combined molecular mass of around 1.2 MDa; APC/C interacts with FZR1 and FBXO5. The C-terminus of APC10 binds to CDC27/APC3. Interacts with PIWIL1; interaction only takes place when PIWIL1 binds piRNA. Interacts with FBXO43; the interaction is direct.

Its pathway is protein modification; protein ubiquitination. In terms of biological role, component of the anaphase promoting complex/cyclosome (APC/C), a cell cycle-regulated E3 ubiquitin ligase that controls progression through mitosis and the G1 phase of the cell cycle. The APC/C complex acts by mediating ubiquitination and subsequent degradation of target proteins: it mainly mediates the formation of 'Lys-11'-linked polyubiquitin chains and, to a lower extent, the formation of 'Lys-48'- and 'Lys-63'-linked polyubiquitin chains. The APC/C complex catalyzes assembly of branched 'Lys-11'-/'Lys-48'-linked branched ubiquitin chains on target proteins. The protein is Anaphase-promoting complex subunit 10 (ANAPC10) of Bos taurus (Bovine).